The primary structure comprises 309 residues: Ornithine carbamoyltransferase (309 aa).

Carbamoyl phosphate contacts are provided by residues 51 to 54 (STRT), Q78, R102, and 129 to 132 (HPVQ). Residues N160, D224, and 228–229 (SM) contribute to the L-ornithine site. Residues 264–265 (CL) and R292 each bind carbamoyl phosphate.

This sequence belongs to the aspartate/ornithine carbamoyltransferase superfamily. OTCase family.

It is found in the cytoplasm. The enzyme catalyses carbamoyl phosphate + L-ornithine = L-citrulline + phosphate + H(+). The protein operates within amino-acid biosynthesis; L-arginine biosynthesis; L-arginine from L-ornithine and carbamoyl phosphate: step 1/3. Functionally, reversibly catalyzes the transfer of the carbamoyl group from carbamoyl phosphate (CP) to the N(epsilon) atom of ornithine (ORN) to produce L-citrulline. This Campylobacter fetus subsp. fetus (strain 82-40) protein is Ornithine carbamoyltransferase.